The following is a 128-amino-acid chain: Large ribosomal subunit protein bL12 (128 aa).

Belongs to the bacterial ribosomal protein bL12 family. As to quaternary structure, homodimer. Part of the ribosomal stalk of the 50S ribosomal subunit. Forms a multimeric L10(L12)X complex, where L10 forms an elongated spine to which 2 to 4 L12 dimers bind in a sequential fashion. Binds GTP-bound translation factors.

In terms of biological role, forms part of the ribosomal stalk which helps the ribosome interact with GTP-bound translation factors. Is thus essential for accurate translation. This is Large ribosomal subunit protein bL12 from Kocuria rhizophila (strain ATCC 9341 / DSM 348 / NBRC 103217 / DC2201).